The chain runs to 518 residues: Vesicular inhibitory amino acid transporter (518 aa).

At 1–125 (MATLIRSKLS…WNVTNAIQGM (125 aa)) the chain is on the cytoplasmic side. A disordered region spans residues 66–98 (EVPSGDPTAEGDSHYQRDGTGPPSSASKDEGLC). The chain crosses the membrane as a helical span at residues 126–146 (FVLGLPYAILHGGYLGLFLII). Residues 147–197 (FAAVVCCYTGKILIACLYEENEDGETVRVRDSYVDIANACCAPRFPKLGGR) are Lumenal, vesicle-facing. The helical transmembrane segment at 198–218 (VVNVAQIIELVMTCILYVVVS) threads the bilayer. Topologically, residues 219–258 (GNLMYNSFPSLPISQKSWSIIATAMLLPCAFLKNLKAVSK) are cytoplasmic. A helical transmembrane segment spans residues 259–279 (FSLLCTLAHFVINVLVIAYCL). Over 280–298 (SRARDWAWDKVKFYIDVKK) the chain is Lumenal, vesicle. Residues 299-319 (FPISIGIIVFSYTSQIFLPSL) form a helical membrane-spanning segment. At 320-334 (EGNMQSPKEFHCMMN) the chain is on the cytoplasmic side. Residues 335–355 (WTHIAACILKGLFALVAYLTW) traverse the membrane as a helical segment. The Lumenal, vesicle portion of the chain corresponds to 356 to 376 (ADETKEVITDNLPSTIRAVVN). Residues 377-397 (LFLVAKALLSYPLPFFAAVEV) form a helical membrane-spanning segment. Over 398–431 (LEKSLFQEGARAFFPNCYGGDGRLKSWGLTLRCA) the chain is Cytoplasmic. A helical transmembrane segment spans residues 432-452 (LVVFTLLMAIYVPHFALLMGL). At 453-454 (TG) the chain is on the lumenal, vesicle side. A helical membrane pass occupies residues 455 to 475 (SLTGAGLCFLLPSLFHLKLLW). Topologically, residues 476 to 482 (RKLQWHQ) are cytoplasmic. A helical membrane pass occupies residues 483 to 503 (VFFDVSIFVIGSICSVSGFVH). The Lumenal, vesicle portion of the chain corresponds to 504-518 (SLEGLIEAFRFNIED).

The protein belongs to the amino acid/polyamine transporter 2 family.

It is found in the cytoplasmic vesicle membrane. It localises to the presynapse. The catalysed reaction is 4-aminobutanoate(out) + n H(+)(in) = 4-aminobutanoate(in) + n H(+)(out). The enzyme catalyses glycine(out) + n H(+)(in) = glycine(in) + n H(+)(out). It catalyses the reaction beta-alanine(out) + n H(+)(in) = beta-alanine(in) + n H(+)(out). Antiporter that exchanges vesicular protons for cytosolic 4-aminobutanoate or to a lesser extend glycine, thus allowing their secretion from nerve terminals. The transport is equally dependent on the chemical and electrical components of the proton gradient. May also transport beta-alanine. Acidification of GABAergic synaptic vesicles is a prerequisite for 4-aminobutanoate uptake. In Xenopus tropicalis (Western clawed frog), this protein is Vesicular inhibitory amino acid transporter.